Here is a 279-residue protein sequence, read N- to C-terminus: uncharacterized protein (279 aa).

The first 19 residues, 1–19 (MKLKLYLIPLLASGIILSA), serve as a signal peptide directing secretion. Cys20 is lipidated: N-palmitoyl cysteine. Cys20 is lipidated: S-diacylglycerol cysteine.

This sequence belongs to the MG439/MG440 family.

It localises to the cell membrane. This is an uncharacterized protein from Mycoplasma pneumoniae (strain ATCC 29342 / M129 / Subtype 1) (Mycoplasmoides pneumoniae).